The following is a 71-amino-acid chain: Small ribosomal subunit protein bS21 (71 aa).

This sequence belongs to the bacterial ribosomal protein bS21 family.

The protein is Small ribosomal subunit protein bS21 of Ruthia magnifica subsp. Calyptogena magnifica.